Reading from the N-terminus, the 384-residue chain is Probable splicing factor YJU2B (384 aa).

The disordered stretch occupies residues 1–28 (MGERKGTNKYYPPDFDPAKHGSLNGYRN). The stretch at 183-212 (NSLLRSKFREEKKQIKEEEERDQALLTKAS) forms a coiled coil. The segment at 275-331 (GIRTKTPSVPGISPVSLGVVRRTSKEENKAEDKSVESPDGSRSRKAEGMCRKEETGC) is disordered. A compositionally biased stretch (basic and acidic residues) spans 297–331 (TSKEENKAEDKSVESPDGSRSRKAEGMCRKEETGC).

It belongs to the CWC16 family.

The protein localises to the nucleus. Functionally, may be involved in mRNA splicing. The polypeptide is Probable splicing factor YJU2B (yju2b) (Xenopus laevis (African clawed frog)).